The sequence spans 162 residues: MKVVLQRVSEASVDVVNELGTLDPTFEPQQIGPGFMILVGVTDGDGDKQIAWLAHKILNLRVFEDAQGKMNRSIQDIGGEILSISQFTLFADVHKGNRPSFIKAGKPEHADLMWIKFNEALRSGGVPVKEGRFGAHMRVGLVNDGPVTIVIDTEHDMPDGTR.

The Gly-cisPro motif, important for rejection of L-amino acids motif lies at 145–146 (GP).

It belongs to the DTD family. In terms of assembly, homodimer.

The protein localises to the cytoplasm. It carries out the reaction glycyl-tRNA(Ala) + H2O = tRNA(Ala) + glycine + H(+). It catalyses the reaction a D-aminoacyl-tRNA + H2O = a tRNA + a D-alpha-amino acid + H(+). An aminoacyl-tRNA editing enzyme that deacylates mischarged D-aminoacyl-tRNAs. Also deacylates mischarged glycyl-tRNA(Ala), protecting cells against glycine mischarging by AlaRS. Acts via tRNA-based rather than protein-based catalysis; rejects L-amino acids rather than detecting D-amino acids in the active site. By recycling D-aminoacyl-tRNA to D-amino acids and free tRNA molecules, this enzyme counteracts the toxicity associated with the formation of D-aminoacyl-tRNA entities in vivo and helps enforce protein L-homochirality. In Bifidobacterium longum (strain NCC 2705), this protein is D-aminoacyl-tRNA deacylase.